We begin with the raw amino-acid sequence, 503 residues long: ATP synthase subunit alpha (503 aa).

170-177 is an ATP binding site; it reads GDKQTGKT.

The protein belongs to the ATPase alpha/beta chains family. In terms of assembly, F-type ATPases have 2 components, CF(1) - the catalytic core - and CF(0) - the membrane proton channel. CF(1) has five subunits: alpha(3), beta(3), gamma(1), delta(1), epsilon(1). CF(0) has three main subunits: a(1), b(2) and c(9-12). The alpha and beta chains form an alternating ring which encloses part of the gamma chain. CF(1) is attached to CF(0) by a central stalk formed by the gamma and epsilon chains, while a peripheral stalk is formed by the delta and b chains.

Its subcellular location is the cell inner membrane. It carries out the reaction ATP + H2O + 4 H(+)(in) = ADP + phosphate + 5 H(+)(out). In terms of biological role, produces ATP from ADP in the presence of a proton gradient across the membrane. The alpha chain is a regulatory subunit. The protein is ATP synthase subunit alpha of Helicobacter pylori (strain Shi470).